Here is a 246-residue protein sequence, read N- to C-terminus: Uridylate kinase (246 aa).

Lys-10 to Gly-13 lines the ATP pocket. Gly-52 lines the UMP pocket. ATP-binding residues include Gly-53 and Arg-57. UMP is bound by residues Asp-72 and Thr-133–Thr-140. Positions 160, 166, and 169 each coordinate ATP.

Belongs to the UMP kinase family. In terms of assembly, homohexamer.

It localises to the cytoplasm. The enzyme catalyses UMP + ATP = UDP + ADP. It participates in pyrimidine metabolism; CTP biosynthesis via de novo pathway; UDP from UMP (UMPK route): step 1/1. Inhibited by UTP. In terms of biological role, catalyzes the reversible phosphorylation of UMP to UDP. The protein is Uridylate kinase of Halorhodospira halophila (strain DSM 244 / SL1) (Ectothiorhodospira halophila (strain DSM 244 / SL1)).